The chain runs to 349 residues: Anthranilate phosphoribosyltransferase (349 aa).

5-phospho-alpha-D-ribose 1-diphosphate contacts are provided by residues Gly-82, 85–86 (GD), 92–95 (NVST), 110–118 (KHGNRAVSG), and Ser-122. Residue Gly-82 coordinates anthranilate. Ser-94 contributes to the Mg(2+) binding site. Anthranilate is bound at residue Asn-113. Residue Arg-168 participates in anthranilate binding. 2 residues coordinate Mg(2+): Asp-227 and Glu-228.

This sequence belongs to the anthranilate phosphoribosyltransferase family. Homodimer. Mg(2+) serves as cofactor.

The enzyme catalyses N-(5-phospho-beta-D-ribosyl)anthranilate + diphosphate = 5-phospho-alpha-D-ribose 1-diphosphate + anthranilate. The protein operates within amino-acid biosynthesis; L-tryptophan biosynthesis; L-tryptophan from chorismate: step 2/5. In terms of biological role, catalyzes the transfer of the phosphoribosyl group of 5-phosphorylribose-1-pyrophosphate (PRPP) to anthranilate to yield N-(5'-phosphoribosyl)-anthranilate (PRA). In Pseudomonas fluorescens (strain Pf0-1), this protein is Anthranilate phosphoribosyltransferase.